The following is a 69-amino-acid chain: Putative membrane protein insertion efficiency factor (69 aa).

Belongs to the UPF0161 family.

Its subcellular location is the cell membrane. Functionally, could be involved in insertion of integral membrane proteins into the membrane. In Clostridium botulinum (strain 657 / Type Ba4), this protein is Putative membrane protein insertion efficiency factor.